The following is a 363-amino-acid chain: Probable mannitol dehydrogenase 3 (363 aa).

Residues cysteine 51, histidine 73, cysteine 104, cysteine 107, cysteine 110, cysteine 118, and cysteine 168 each contribute to the Zn(2+) site.

This sequence belongs to the zinc-containing alcohol dehydrogenase family. Zn(2+) serves as cofactor.

It catalyses the reaction D-mannitol + NAD(+) = D-mannose + NADH + H(+). Its function is as follows. Oxidizes mannitol to mannose. Provides the initial step by which translocated mannitol is committed to central metabolism and, by regulating mannitol pool size, is important in regulating salt tolerance at the cellular level. This Stylosanthes humilis (Townsville stylo) protein is Probable mannitol dehydrogenase 3 (CAD3).